A 536-amino-acid chain; its full sequence is Chaperonin GroEL (536 aa).

Residues 30–33, 86–90, G414, and D494 each bind ATP; these read TLGP and DGTTT.

The protein belongs to the chaperonin (HSP60) family. Forms a cylinder of 14 subunits composed of two heptameric rings stacked back-to-back. Interacts with the co-chaperonin GroES.

It localises to the cytoplasm. It carries out the reaction ATP + H2O + a folded polypeptide = ADP + phosphate + an unfolded polypeptide.. In terms of biological role, together with its co-chaperonin GroES, plays an essential role in assisting protein folding. The GroEL-GroES system forms a nano-cage that allows encapsulation of the non-native substrate proteins and provides a physical environment optimized to promote and accelerate protein folding. This Methanospirillum hungatei JF-1 (strain ATCC 27890 / DSM 864 / NBRC 100397 / JF-1) protein is Chaperonin GroEL.